The primary structure comprises 731 residues: Unconventional prefoldin RPB5 interactor-like protein (731 aa).

Coiled coils occupy residues 91–115 and 143–176; these read RLKL…KLHT and LAEH…LRKL. The span at 205–217 shows a compositional bias: polar residues; that stretch reads PLKSTNESSPKSL. Disordered stretches follow at residues 205–224, 259–302, and 370–396; these read PLKS…EEDE, MSGE…EEEV, and ASEE…TVSE. Positions 220-258 form a coiled coil; that stretch reads EEEDELWKKLEAEEQNEADELSSEAEESLKTTDNLVRQL. Positions 285-300 are enriched in acidic residues; it reads ISEDDGDDDDEGDQEE. Coiled-coil stretches lie at residues 357 to 379 and 452 to 477; these read DDLQ…EVVE and SIKT…VKEN. Polar residues-rich tracts occupy residues 508-518 and 575-599; these read GAIPSPSSDQS and SQFS…TSND. Disordered stretches follow at residues 508-527, 567-682, and 694-731; these read GAIP…KPSD, GSAY…DLRD, and VEKE…LNKT. The span at 611–621 shows a compositional bias: basic and acidic residues; the sequence is FYEKYEKDRAK. Positions 623–644 are enriched in polar residues; that stretch reads SKSNSSEGDATDPESATKSILR. Positions 661–673 are enriched in basic residues; it reads KKGRKVRNQKKKE. A compositionally biased stretch (basic and acidic residues) spans 721–731; that stretch reads RFKEQRALNKT.

Belongs to the RNA polymerase II subunit 5-mediating protein family. In terms of assembly, interacts with serine/threonine-protein phosphatases flw/PP1beta9C and Pp1-87B with higher affinity for Pp1-87B.

Its subcellular location is the cytoplasm. It localises to the chromosome. It is found in the nucleus. In terms of biological role, inhibits the activity of serine/threonine-protein phosphatases flw/PP1beta9C and Pp1-87B. Required for germ line cell viability and differentiation, normal transcriptional activity and maintenance of DNA integrity. In Drosophila melanogaster (Fruit fly), this protein is Unconventional prefoldin RPB5 interactor-like protein.